The chain runs to 1899 residues: Protocadherin-15 (1899 aa).

A signal peptide spans M1 to A26. Residues Q27–A1376 are Extracellular-facing. The cysteines at positions 32 and 120 are disulfide-linked. Cadherin domains are found at residues G38–F147, Q148–F265, R278–F395, T396–F509, S510–F616, P617–F717, M719–F819, T820–F926, S927–F1035, Q1037–F1144, and T1145–L1259. Residues L1377–V1397 traverse the membrane as a helical segment. Residues S1398 to L1899 lie on the Cytoplasmic side of the membrane. Disordered stretches follow at residues S1668–P1687, H1700–I1721, and T1734–L1820. Pro residues-rich tracts occupy residues L1706–P1717 and P1743–L1773. Over residues P1774–S1791 the composition is skewed to low complexity. The segment covering A1804 to P1814 has biased composition (pro residues).

In terms of tissue distribution, in the utricle, localizes to the distal region of the kinocilium and near the tips of the stereocilia.

It localises to the cell membrane. Functionally, calcium-dependent cell-adhesion protein. Required for inner ear neuroepithelial cell elaboration and cochlear function. Probably involved in the maintenance of normal retinal function. This chain is Protocadherin-15 (Pcdh15), found in Gallus gallus (Chicken).